A 458-amino-acid polypeptide reads, in one-letter code: Retinoic acid receptor alpha-B (458 aa).

The interval 1–79 is modulating; it reads MYESVDVVGL…PPSPPPPPRV (79 aa). The segment at 48-75 is disordered; that stretch reads HWSGSNHSVETQSTSSEEIVPSPPSPPP. Over residues 49–64 the composition is skewed to polar residues; the sequence is WSGSNHSVETQSTSSE. Residues 80–155 constitute a DNA-binding region (nuclear receptor); it reads YKPCFVCQDK…VGMSKESVRN (76 aa). 2 NR C4-type zinc fingers span residues 83–103 and 119–138; these read CFVC…CEGC and CHRE…CQYC. The hinge stretch occupies residues 156–177; the sequence is DRNKRKKDDKKQECLENYVLSP. One can recognise an NR LBD domain in the interval 178 to 412; that stretch reads DTEKMIEQVR…PLIQEMLENS (235 aa). Residues 403–411 carry the 9aaTAD motif; the sequence is PLIQEMLEN. The disordered stretch occupies residues 411 to 458; sequence NSEGLEGGGSKGAGGGGGGGGGKGAPPGSCSPSLSPSSAHSSPSAHSP. A compositionally biased stretch (gly residues) spans 415-435; the sequence is LEGGGSKGAGGGGGGGGGKGA. A compositionally biased stretch (low complexity) spans 436-458; it reads PPGSCSPSLSPSSAHSSPSAHSP.

This sequence belongs to the nuclear hormone receptor family. NR1 subfamily. Heterodimer; with an rxr molecule. Binds DNA preferentially as a rar/rxr heterodimer. In the embryo, zygotic expression largely overlaps that of raraa, with high levels in hindbrain, lateral plate mesoderm (LPM) and tail bud, but in later stages rarab is expressed more broadly in the brain, pectoral fin bud and pharyngeal arches.

It is found in the nucleus. Receptor for retinoic acid. Retinoic acid receptors bind as heterodimers to their target response elements in response to their ligands, all-trans or 9-cis retinoic acid, and regulate gene expression in various biological processes. The rar/rxr heterodimers bind to the retinoic acid response elements (RARE) composed of tandem 5'-AGGTCA-3' sites known as DR1-DR5. Required for hindbrain development and, in lateral plate mesoderm, for specification of the pectoral fins. This Danio rerio (Zebrafish) protein is Retinoic acid receptor alpha-B.